Here is a 906-residue protein sequence, read N- to C-terminus: Cadherin-2 (906 aa).

A signal peptide spans Met1–Ala25. Positions Ser26–Arg159 are excised as a propeptide. Ser96 and Ser135 each carry phosphoserine. Cadherin domains are found at residues Asp160–Phe267, Leu268–Phe382, Thr383–Phe497, Ala498–Pro603, and Gln604–Arg714. Over Asp160–Ala724 the chain is Extracellular. Glu170 contributes to the Ca(2+) binding site. Asn190 carries N-linked (GlcNAc...) asparagine glycosylation. The Ca(2+) site is built by Asp226, Glu228, Asp259, Met260, Asn261, Asp262, and Asn263. N-linked (GlcNAc...) asparagine glycosylation is present at Asn273. Residues Asp293, Asp295, and Asn301 each contribute to the Ca(2+) site. N-linked (GlcNAc...) asparagine glycosylation occurs at Asn325. A Ca(2+)-binding site is contributed by Asp353. 5 N-linked (GlcNAc...) asparagine glycosylation sites follow: Asn402, Asn572, Asn622, Asn651, and Asn692. A helical membrane pass occupies residues Ile725–Trp745. Residues Met746–Asp906 lie on the Cytoplasmic side of the membrane. A compositionally biased stretch (low complexity) spans Ser863–Gly880. Positions Ser863–Tyr884 are disordered.

In terms of assembly, homodimer (via extracellular region). Can also form heterodimers with other cadherins (via extracellular region). Dimerization occurs in trans, i.e. with a cadherin chain from another cell. Interacts with CDCP1. Interacts with PCDH8; this complex may also include TAOK2. The interaction with PCDH8 may lead to internalization through TAOK2/p38 MAPK pathway. Identified in a complex containing FGFR4, NCAM1, CDH2, PLCG1, FRS2, SRC, SHC1, GAP43 and CTTN. May interact with OBSCN (via protein kinase domain 2). Interacts with FBXO45. In terms of processing, cleaved by MMP24. Ectodomain cleavage leads to the generation of a soluble 90 kDa N-terminal soluble fragment and a 45 kDa membrane-bound C-terminal fragment 1 (CTF1), which is further cleaved by gamma-secretase into a 35 kDa. Cleavage in neural stem cells by MMP24 affects CDH2-mediated anchorage of neural stem cells to ependymocytes in the adult subependymal zone, leading to modulate neural stem cell quiescence. May be phosphorylated by OBSCN.

It is found in the cell membrane. The protein localises to the sarcolemma. Its subcellular location is the cell junction. It localises to the cell surface. The protein resides in the desmosome. It is found in the adherens junction. In terms of biological role, calcium-dependent cell adhesion protein; preferentially mediates homotypic cell-cell adhesion by dimerization with a CDH2 chain from another cell. Cadherins may thus contribute to the sorting of heterogeneous cell types. Acts as a regulator of neural stem cells quiescence by mediating anchorage of neural stem cells to ependymocytes in the adult subependymal zone: upon cleavage by MMP24, CDH2-mediated anchorage is affected, leading to modulate neural stem cell quiescence. Plays a role in cell-to-cell junction formation between pancreatic beta cells and neural crest stem (NCS) cells, promoting the formation of processes by NCS cells. CDH2 may be involved in neuronal recognition mechanism. In hippocampal neurons, may regulate dendritic spine density. The chain is Cadherin-2 (CDH2) from Rhinolophus ferrumequinum (Greater horseshoe bat).